We begin with the raw amino-acid sequence, 87 residues long: Defensin-like protein 100 (87 aa).

Residues 1 to 29 form the signal peptide; sequence MRSLRLRTVVVATIVVCLSVLLSPTEVDG. 4 disulfides stabilise this stretch: C31-C79, C38-C64, C44-C76, and C48-C78.

It belongs to the DEFL family.

It is found in the secreted. This Arabidopsis thaliana (Mouse-ear cress) protein is Defensin-like protein 100.